Reading from the N-terminus, the 248-residue chain is MLTIISSAKTLNFELIAFKGELTSPAFPKITNQLLAIVKNYSEVQLSKTMDISEKLAHLNKERFQNFEKQDSKAAIFAYAGDVFNNIQSKNLSEDAVNFLQSHLLIISGLYGALKPLDAIKPYRLEMAAKLNEINDLSKFWQDEITNYINHTLEHHKHKYLLNLASQEYSSVLNQDKLKYPIINIHFKENRNGKLATIGINAKKARGNMVNFIANNLIDSPDLLKEFSYLGYKYSSKDSLNNDLVFVK.

Belongs to the UPF0246 family.

The polypeptide is UPF0246 protein A1I_02510 (Rickettsia bellii (strain OSU 85-389)).